A 280-amino-acid polypeptide reads, in one-letter code: Killer cell lectin-like receptor 7 (280 aa).

Over 1–44 the chain is Cytoplasmic; sequence MSEQEVTYSTVRFHESSRLQKLVRTEEPQRPREACYREYSVPWK. The chain crosses the membrane as a helical; Signal-anchor for type II membrane protein span at residues 45-66; it reads LIVIACGILCFLLLVTVALLAI. At 67-280 the chain is on the extracellular side; it reads TIFQHSQQKH…CGKRLDKFPH (214 aa). N-linked (GlcNAc...) asparagine glycosylation is present at asparagine 104. Residues 156-275 form the C-type lectin domain; that stretch reads GFEKYWFCYG…SYICICGKRL (120 aa). Disulfide bonds link cysteine 163–cysteine 168, cysteine 181–cysteine 269, cysteine 185–cysteine 271, and cysteine 250–cysteine 263. Asparagine 239 carries N-linked (GlcNAc...) asparagine glycosylation.

Homodimer; disulfide-linked.

The protein localises to the membrane. Functionally, receptor on natural killer (NK) cells for class I MHC. The chain is Killer cell lectin-like receptor 7 (Klra7) from Mus musculus (Mouse).